Here is a 453-residue protein sequence, read N- to C-terminus: Bifunctional protein GlmU (453 aa).

A pyrophosphorylase region spans residues 1-226 (MKFSAVILAA…PIEVEGVNDR (226 aa)). Residues 8-11 (LAAG), Lys-22, Gln-73, 78-79 (GT), 100-102 (YGD), Gly-137, Glu-151, Asn-166, and Asn-224 contribute to the UDP-N-acetyl-alpha-D-glucosamine site. Asp-102 lines the Mg(2+) pocket. Residue Asn-224 participates in Mg(2+) binding. The segment at 227–247 (AQLARLERAFQAAQAKKLLEQ) is linker. An N-acetyltransferase region spans residues 248 to 453 (GVMLRDPARF…TGWQRPVKKK (206 aa)). Residues Arg-330 and Lys-348 each contribute to the UDP-N-acetyl-alpha-D-glucosamine site. The Proton acceptor role is filled by His-360. The UDP-N-acetyl-alpha-D-glucosamine site is built by Tyr-363 and Asn-374. Acetyl-CoA is bound by residues Ala-377, 383-384 (NY), Ser-402, Ala-420, and Arg-437.

The protein in the N-terminal section; belongs to the N-acetylglucosamine-1-phosphate uridyltransferase family. This sequence in the C-terminal section; belongs to the transferase hexapeptide repeat family. As to quaternary structure, homotrimer. It depends on Mg(2+) as a cofactor.

The protein resides in the cytoplasm. The enzyme catalyses alpha-D-glucosamine 1-phosphate + acetyl-CoA = N-acetyl-alpha-D-glucosamine 1-phosphate + CoA + H(+). It carries out the reaction N-acetyl-alpha-D-glucosamine 1-phosphate + UTP + H(+) = UDP-N-acetyl-alpha-D-glucosamine + diphosphate. It functions in the pathway nucleotide-sugar biosynthesis; UDP-N-acetyl-alpha-D-glucosamine biosynthesis; N-acetyl-alpha-D-glucosamine 1-phosphate from alpha-D-glucosamine 6-phosphate (route II): step 2/2. Its pathway is nucleotide-sugar biosynthesis; UDP-N-acetyl-alpha-D-glucosamine biosynthesis; UDP-N-acetyl-alpha-D-glucosamine from N-acetyl-alpha-D-glucosamine 1-phosphate: step 1/1. The protein operates within bacterial outer membrane biogenesis; LPS lipid A biosynthesis. Catalyzes the last two sequential reactions in the de novo biosynthetic pathway for UDP-N-acetylglucosamine (UDP-GlcNAc). The C-terminal domain catalyzes the transfer of acetyl group from acetyl coenzyme A to glucosamine-1-phosphate (GlcN-1-P) to produce N-acetylglucosamine-1-phosphate (GlcNAc-1-P), which is converted into UDP-GlcNAc by the transfer of uridine 5-monophosphate (from uridine 5-triphosphate), a reaction catalyzed by the N-terminal domain. The polypeptide is Bifunctional protein GlmU (Vibrio vulnificus (strain YJ016)).